The primary structure comprises 44 residues: Photosystem I reaction center subunit IX (44 aa).

The chain crosses the membrane as a helical span at residues 7 to 27 (YLSTAPVLAILCVSFLAALLI).

Belongs to the PsaJ family.

The protein resides in the plastid. It is found in the chloroplast thylakoid membrane. May help in the organization of the PsaE and PsaF subunits. The chain is Photosystem I reaction center subunit IX from Pinus thunbergii (Japanese black pine).